Consider the following 784-residue polypeptide: Receptor-like protein 38 (784 aa).

An N-terminal signal peptide occupies residues 1–30; that stretch reads MIRSQSYCFLGITITIYFFFCLLPLPNTFA. At 31-752 the chain is on the extracellular side; sequence SPPTQSLCRH…SELEEPVLNW (722 aa). 5 LRR repeats span residues 109–133, 134–157, 158–180, 182–204, and 205–227; these read LQHL…IENL, SHLT…IGNL, NQLE…SFAN, TKLS…LSNL, and TSLA…DLSG. N-linked (GlcNAc...) asparagine glycosylation is present at Asn-132. Asn-180, Asn-193, and Asn-203 each carry an N-linked (GlcNAc...) asparagine glycan. The stretch at 228–251 is one LRR 6; degenerate repeat; that stretch reads LHNLEQIFGNENSFVGLFPASLLK. LRR repeat units follow at residues 252-276, 278-301, 302-324, 326-349, 351-373, 374-400, 402-422, 423-446, 447-470, and 472-496; these read ISSL…NTSS, SRLT…LSKL, VNLE…SISK, VNLT…IWKP, NLQS…EVVN, GAKL…NFRF, FFLD…LKNS, TDFN…CMDS, TMLR…LMNC, and DMEF…SRKS. N-linked (GlcNAc...) asparagine glycosylation is present at Asn-273. Asn-327 carries an N-linked (GlcNAc...) asparagine glycan. N-linked (GlcNAc...) asparagine glycosylation is found at Asn-421 and Asn-432. Residues 497-518 form an LRR 17; degenerate repeat; it reads LMVLVLRSNAFYGPVYNSTTYL. Residues Asn-513, Asn-544, and Asn-562 are each glycosylated (N-linked (GlcNAc...) asparagine). The stretch at 520-544 is one LRR 18 repeat; that stretch reads FPRLSIIDISNNDFVGSLPQDYFAN. 4 LRR repeats span residues 608–632, 633–656, 657–680, and 682–705; these read FRGF…IGLL, SELL…LANI, TNLE…LGNL, and FLSN…QFGT. 6 N-linked (GlcNAc...) asparagine glycosylation sites follow: Asn-639, Asn-655, Asn-668, Asn-679, Asn-687, and Asn-707. Residues 753-773 form a helical membrane-spanning segment; sequence IAAAIAFGPGVFCGFVIGHIF. At 774–784 the chain is on the cytoplasmic side; it reads TSYKHLWFIAR.

The protein belongs to the RLP family.

It localises to the cell membrane. The chain is Receptor-like protein 38 from Arabidopsis thaliana (Mouse-ear cress).